We begin with the raw amino-acid sequence, 201 residues long: Large ribosomal subunit protein bL25 (201 aa).

It belongs to the bacterial ribosomal protein bL25 family. CTC subfamily. As to quaternary structure, part of the 50S ribosomal subunit; part of the 5S rRNA/L5/L18/L25 subcomplex. Contacts the 5S rRNA. Binds to the 5S rRNA independently of L5 and L18.

Its function is as follows. This is one of the proteins that binds to the 5S RNA in the ribosome where it forms part of the central protuberance. This chain is Large ribosomal subunit protein bL25, found in Akkermansia muciniphila (strain ATCC BAA-835 / DSM 22959 / JCM 33894 / BCRC 81048 / CCUG 64013 / CIP 107961 / Muc).